Reading from the N-terminus, the 202-residue chain is Amelogenin (202 aa).

Serine 16 is modified (phosphoserine). Positions glutamine 77–aspartate 202 are disordered. The span at proline 78–proline 87 shows a compositional bias: pro residues. Residues glutamine 101–tyrosine 112 show a composition bias toward low complexity. Pro residues predominate over residues glutamine 113–proline 125. Residues isoleucine 126–proline 158 are compositionally biased toward low complexity. Pro residues predominate over residues proline 164 to proline 176.

The protein belongs to the amelogenin family.

It localises to the secreted. The protein localises to the extracellular space. It is found in the extracellular matrix. Functionally, plays a role in the biomineralization of teeth. Seems to regulate the formation of crystallites during the secretory stage of tooth enamel development. Thought to play a major role in the structural organization and mineralization of developing enamel. The polypeptide is Amelogenin (AMEL) (Monodelphis domestica (Gray short-tailed opossum)).